Here is a 60-residue protein sequence, read N- to C-terminus: Probable tautomerase SP_1017 (60 aa).

The active-site Proton acceptor; via imino nitrogen is Pro2.

Belongs to the 4-oxalocrotonate tautomerase family.

This chain is Probable tautomerase SP_1017, found in Streptococcus pneumoniae serotype 4 (strain ATCC BAA-334 / TIGR4).